Consider the following 397-residue polypeptide: Leucine carboxyl methyltransferase 1 (397 aa).

The tract at residues 17-61 (AIQTPPPTDPNAAPAHRPAPRPALGRCRPPHRRRRRLRPPVRPPL) is disordered. Positions 26–43 (PNAAPAHRPAPRPALGRC) are enriched in low complexity. A compositionally biased stretch (basic residues) spans 44-55 (RPPHRRRRRLRP). Residues R119, G142, D168, 224–225 (DL), and E259 each bind S-adenosyl-L-methionine.

It belongs to the methyltransferase superfamily. LCMT family.

It carries out the reaction [phosphatase 2A protein]-C-terminal L-leucine + S-adenosyl-L-methionine = [phosphatase 2A protein]-C-terminal L-leucine methyl ester + S-adenosyl-L-homocysteine. Methylates the carboxyl group of the C-terminal leucine residue of protein phosphatase 2A catalytic subunits to form alpha-leucine ester residues. This chain is Leucine carboxyl methyltransferase 1 (PPM1), found in Cryptococcus neoformans var. neoformans serotype D (strain B-3501A) (Filobasidiella neoformans).